Reading from the N-terminus, the 313-residue chain is Probable WRKY transcription factor 41 (313 aa).

A DNA-binding region (WRKY) is located at residues 135–203 (GLEGPHDDIF…YRGTHTCSQG (69 aa)).

Belongs to the WRKY group III family.

It localises to the nucleus. Functionally, transcription factor. Interacts specifically with the W box (5'-(T)TGAC[CT]-3'), a frequently occurring elicitor-responsive cis-acting element. This is Probable WRKY transcription factor 41 (WRKY41) from Arabidopsis thaliana (Mouse-ear cress).